A 94-amino-acid polypeptide reads, in one-letter code: Scorpine (94 aa).

The N-terminal stretch at 1–19 (MNSKLTALIFLGLIAIAYC) is a signal peptide. One can recognise a BetaSPN-type CS-alpha/beta domain in the interval 55-94 (EFQCMANMDMLGNCEKHCQTSGEKGYCHGTKCKCGTPLSY). Intrachain disulfides connect cysteine 58–cysteine 81, cysteine 68–cysteine 86, and cysteine 72–cysteine 88.

The protein belongs to the long chain scorpion toxin family. Class 3 subfamily. Expressed by the venom gland.

Its subcellular location is the secreted. It is found in the target cell membrane. This full-length protein shows antibacterial activity against B.subtilis and K.pneumoniae. Also shows a potent inhibitory effect on the ookinete (ED(50) 0.7 uM) and gamete (ED(50) 10 uM) stages of Plasmodium berghei development. In addition, induces cell membrane disruption, leakage currents and cell death on HEK293 cell line (tested at 25 uM). The chain is Scorpine from Pandinus imperator (Emperor scorpion).